The primary structure comprises 404 residues: Protein L-Myc-1b (404 aa).

Disordered regions lie at residues 175–195 (KKQV…EEID) and 238–331 (QQHN…FLER). Residues 287–315 (VPAQSPTVSASPTHTSYHLKSQPSSPQSS) show a composition bias toward polar residues. The bHLH domain occupies 321–373 (DKRKTHNFLERKRRNDLRSRFLALRDEIPGLVDCPKTPKVVILTKATEYLRTL). Positions 373–401 (LHVSDRQKAQEKKQLKSKQQQLLRRLAEL) are leucine-zipper.

Efficient DNA binding requires dimerization with another bHLH protein. Binds DNA as a heterodimer with max.

Its subcellular location is the nucleus. The sequence is that of Protein L-Myc-1b from Danio rerio (Zebrafish).